The primary structure comprises 469 residues: Cysteine--tRNA ligase (469 aa).

Residue Cys-28 participates in Zn(2+) binding. A 'HIGH' region motif is present at residues 30–40; sequence CTVYDLCHIGH. Zn(2+)-binding residues include Cys-216, His-241, and Glu-245. Positions 273–277 match the 'KMSKS' region motif; the sequence is KMSKS. An ATP-binding site is contributed by Lys-276.

Belongs to the class-I aminoacyl-tRNA synthetase family. In terms of assembly, monomer. It depends on Zn(2+) as a cofactor.

It localises to the cytoplasm. The enzyme catalyses tRNA(Cys) + L-cysteine + ATP = L-cysteinyl-tRNA(Cys) + AMP + diphosphate. The protein is Cysteine--tRNA ligase of Colwellia psychrerythraea (strain 34H / ATCC BAA-681) (Vibrio psychroerythus).